A 318-amino-acid chain; its full sequence is MTSAYDKLHSTLDVKAFGRVAVLYGGKSAEREVSLKSGAAVIDALSTAGVDVVAIDVGDDLLARLQSEKIDRAFIILHGRGGEDGSMQGLLECLGIPYTGSGILASALAMDKLRTKQVWQSLGIPTPRHAVLASESDCLQASTELGFPLIVKPAHEGSSIGMAKVNSTQELVAAWQDAAKYDSQVLVEQWIHGPEFTIAVLRGQVLPPIALGTPHVFYDYDAKYIVNDTQYRIPCGLDSVKEQELIDLTARACDAIGIEGWGRLDVMQDEQGRFWLLEVNTAPGMTDHSLVPMAARAAGLDFQQLVLAILAESVATRG.

In terms of domain architecture, ATP-grasp spans lysine 116–alanine 311. An ATP-binding site is contributed by serine 142 to threonine 197. The Mg(2+) site is built by aspartate 265, glutamate 278, and asparagine 280.

It belongs to the D-alanine--D-alanine ligase family. Requires Mg(2+) as cofactor. Mn(2+) serves as cofactor.

Its subcellular location is the cytoplasm. The catalysed reaction is 2 D-alanine + ATP = D-alanyl-D-alanine + ADP + phosphate + H(+). The protein operates within cell wall biogenesis; peptidoglycan biosynthesis. Cell wall formation. This Pseudomonas putida (strain ATCC 47054 / DSM 6125 / CFBP 8728 / NCIMB 11950 / KT2440) protein is D-alanine--D-alanine ligase B.